A 181-amino-acid polypeptide reads, in one-letter code: Adenine phosphoribosyltransferase (181 aa).

It belongs to the purine/pyrimidine phosphoribosyltransferase family. In terms of assembly, homodimer.

Its subcellular location is the cytoplasm. It catalyses the reaction AMP + diphosphate = 5-phospho-alpha-D-ribose 1-diphosphate + adenine. It functions in the pathway purine metabolism; AMP biosynthesis via salvage pathway; AMP from adenine: step 1/1. Catalyzes a salvage reaction resulting in the formation of AMP, that is energically less costly than de novo synthesis. The polypeptide is Adenine phosphoribosyltransferase (Vibrio parahaemolyticus serotype O3:K6 (strain RIMD 2210633)).